Consider the following 610-residue polypeptide: All-trans-retinol 13,14-reductase (610 aa).

An N-terminal signal peptide occupies residues 1–18 (MWLPLVLLLAVLLLAVLC).

It belongs to the carotenoid/retinoid oxidoreductase family. CrtISO subfamily. NAD(+) is required as a cofactor. The cofactor is NADP(+). It depends on FAD as a cofactor. Expressed in liver; expression positively correlates with obesity and liver steatosis. Expressed in adipose tissue; expression tends to be decreased in obese versus lean individuals.

The protein localises to the endoplasmic reticulum membrane. The enzyme catalyses all-trans-13,14-dihydroretinol + A = all-trans-retinol + AH2. Catalyzes the saturation of all-trans-retinol to all-trans-13,14-dihydroretinol. Does not exhibit any activity toward all-trans-retinoic acid, nor 9-cis, 11-cis or 13-cis-retinol isomers. May play a role in the metabolism of vitamin A. Independently of retinol conversion, may regulate liver metabolism upstream of MLXIPL/ChREBP. May play a role in adipocyte differentiation. This chain is All-trans-retinol 13,14-reductase (RETSAT), found in Homo sapiens (Human).